The sequence spans 285 residues: MAVPKIVLFYVFTPLADPEAIRLWQYTLAEAHDLTGRILVSEHGINATVGGDIRDVKRYVKGTRSYAPFKDADIKWSDGLGNDFPRLSVKVRPEIVTFGAPGELKVDADGVVGGGTHLAPEEVHRLVEGRGDDVVFFDGRNGFEAEIGRFRDAVVPDVSTTRDFVHELDSGKYDHLKDKAVVTYCTGGVRCEVLSSLMRSRGFGEVYQLDGGIVRYGEAFGDTGLWEGSLYVFDKRMTIEFSDQAKTLGRCTRCGGPTSRYENLPDDRGRELVLVCAGCTENRAG.

The 96-residue stretch at 130 to 225 folds into the Rhodanese domain; that stretch reads RGDDVVFFDG…YGEAFGDTGL (96 aa). Cys185 acts as the Cysteine persulfide intermediate in catalysis.

It belongs to the TrhO family.

The enzyme catalyses uridine(34) in tRNA + AH2 + O2 = 5-hydroxyuridine(34) in tRNA + A + H2O. Functionally, catalyzes oxygen-dependent 5-hydroxyuridine (ho5U) modification at position 34 in tRNAs. The polypeptide is tRNA uridine(34) hydroxylase (Rhodococcus opacus (strain B4)).